A 131-amino-acid polypeptide reads, in one-letter code: Leptin receptor overlapping transcript-like 1 (131 aa).

4 consecutive transmembrane segments (helical) span residues 7 to 27 (LISLSFGGAIGLMFLMLGCAL), 32 to 52 (QYWPLFVLFFYILSPIPYCIA), 69 to 89 (LAIFLTTGIVVSAFGLPIVFA), and 100 to 120 (ALVLTGNTVIFATILGFFLVF).

The protein belongs to the OB-RGRP/VPS55 family.

It localises to the membrane. In terms of biological role, negatively regulates growth hormone (GH) receptor cell surface expression in liver. May play a role in liver resistance to GH during periods of reduced nutrient availability. The sequence is that of Leptin receptor overlapping transcript-like 1 (LEPROTL1) from Bos taurus (Bovine).